The following is a 474-amino-acid chain: Glycogen synthase (474 aa).

Lys12 serves as a coordination point for ADP-alpha-D-glucose.

It belongs to the glycosyltransferase 1 family. Bacterial/plant glycogen synthase subfamily.

It catalyses the reaction [(1-&gt;4)-alpha-D-glucosyl](n) + ADP-alpha-D-glucose = [(1-&gt;4)-alpha-D-glucosyl](n+1) + ADP + H(+). The protein operates within glycan biosynthesis; glycogen biosynthesis. Synthesizes alpha-1,4-glucan chains using ADP-glucose. This is Glycogen synthase from Xanthomonas campestris pv. campestris (strain 8004).